Consider the following 299-residue polypeptide: Recombination-associated protein RdgC (299 aa).

Belongs to the RdgC family.

Its subcellular location is the cytoplasm. It localises to the nucleoid. Its function is as follows. May be involved in recombination. The protein is Recombination-associated protein RdgC of Neisseria meningitidis serogroup C (strain 053442).